A 426-amino-acid chain; its full sequence is Serine--tRNA ligase (426 aa).

233-235 (TSE) lines the L-serine pocket. 264 to 266 (RSE) contributes to the ATP binding site. Residue Glu-287 participates in L-serine binding. 351–354 (EISS) provides a ligand contact to ATP. Ser-387 serves as a coordination point for L-serine.

The protein belongs to the class-II aminoacyl-tRNA synthetase family. Type-1 seryl-tRNA synthetase subfamily. As to quaternary structure, homodimer. The tRNA molecule binds across the dimer.

Its subcellular location is the cytoplasm. It carries out the reaction tRNA(Ser) + L-serine + ATP = L-seryl-tRNA(Ser) + AMP + diphosphate + H(+). The enzyme catalyses tRNA(Sec) + L-serine + ATP = L-seryl-tRNA(Sec) + AMP + diphosphate + H(+). Its pathway is aminoacyl-tRNA biosynthesis; selenocysteinyl-tRNA(Sec) biosynthesis; L-seryl-tRNA(Sec) from L-serine and tRNA(Sec): step 1/1. Its function is as follows. Catalyzes the attachment of serine to tRNA(Ser). Is also able to aminoacylate tRNA(Sec) with serine, to form the misacylated tRNA L-seryl-tRNA(Sec), which will be further converted into selenocysteinyl-tRNA(Sec). The chain is Serine--tRNA ligase from Xylella fastidiosa (strain M23).